We begin with the raw amino-acid sequence, 152 residues long: Cell division protein SepF (152 aa).

The disordered stretch occupies residues 21 to 56 (EYIETEQDHPEEHEQQKDKQPAYAQKPQGKQNVVSL). Over residues 26–40 (EQDHPEEHEQQKDKQ) the composition is skewed to basic and acidic residues.

It belongs to the SepF family. In terms of assembly, homodimer. Interacts with FtsZ.

Its subcellular location is the cytoplasm. Cell division protein that is part of the divisome complex and is recruited early to the Z-ring. Probably stimulates Z-ring formation, perhaps through the cross-linking of FtsZ protofilaments. Its function overlaps with FtsA. The sequence is that of Cell division protein SepF from Bacillus velezensis (strain DSM 23117 / BGSC 10A6 / LMG 26770 / FZB42) (Bacillus amyloliquefaciens subsp. plantarum).